The following is a 760-amino-acid chain: Elongation factor G, mitochondrial (760 aa).

Residues 1-37 (MIRGMLPRGLRALRPSVSPTVVSSSLHRNFHSSIRRF) constitute a mitochondrion transit peptide. The tr-type G domain occupies 68–349 (SRLRNIGVSA…AVVDYLPQPN (282 aa)). Residues 77–84 (AHIDSGKT), 148–152 (DTPGH), and 202–205 (NKMD) each bind GTP.

This sequence belongs to the TRAFAC class translation factor GTPase superfamily. Classic translation factor GTPase family. EF-G/EF-2 subfamily.

The protein resides in the mitochondrion. It participates in protein biosynthesis; polypeptide chain elongation. In terms of biological role, mitochondrial GTPase that catalyzes the GTP-dependent ribosomal translocation step during translation elongation. During this step, the ribosome changes from the pre-translocational (PRE) to the post-translocational (POST) state as the newly formed A-site-bound peptidyl-tRNA and P-site-bound deacylated tRNA move to the P and E sites, respectively. Catalyzes the coordinated movement of the two tRNA molecules, the mRNA and conformational changes in the ribosome. The chain is Elongation factor G, mitochondrial from Meyerozyma guilliermondii (strain ATCC 6260 / CBS 566 / DSM 6381 / JCM 1539 / NBRC 10279 / NRRL Y-324) (Yeast).